Here is a 196-residue protein sequence, read N- to C-terminus: RNA polymerase II subunit B1 CTD phosphatase RTR2 (196 aa).

The segment at 52-123 adopts an RTR1-type zinc-finger fold; it reads YLARLLSPMS…LSQTPLHERR (72 aa). 4 residues coordinate Zn(2+): cysteine 75, cysteine 80, cysteine 99, and histidine 103.

It belongs to the RPAP2 family.

It is found in the cytoplasm. Its subcellular location is the nucleus. It carries out the reaction O-phospho-L-seryl-[protein] + H2O = L-seryl-[protein] + phosphate. The catalysed reaction is O-phospho-L-threonyl-[protein] + H2O = L-threonyl-[protein] + phosphate. Functionally, probable RNA polymerase II subunit B1 C-terminal domain (CTD) phosphatase that regulates RNA polymerase II transcription. May have functional redundancy with RTR1. This Saccharomyces cerevisiae (strain ATCC 204508 / S288c) (Baker's yeast) protein is RNA polymerase II subunit B1 CTD phosphatase RTR2 (RTR2).